Here is a 307-residue protein sequence, read N- to C-terminus: tRNA dimethylallyltransferase (307 aa).

Residue 10-17 coordinates ATP; sequence GPTASGKS. 12–17 provides a ligand contact to substrate; it reads TASGKS. 2 interaction with substrate tRNA regions span residues 35-38 and 159-163; these read DSMQ and QRLCR.

Belongs to the IPP transferase family. Monomer. Requires Mg(2+) as cofactor.

The catalysed reaction is adenosine(37) in tRNA + dimethylallyl diphosphate = N(6)-dimethylallyladenosine(37) in tRNA + diphosphate. In terms of biological role, catalyzes the transfer of a dimethylallyl group onto the adenine at position 37 in tRNAs that read codons beginning with uridine, leading to the formation of N6-(dimethylallyl)adenosine (i(6)A). In Phenylobacterium zucineum (strain HLK1), this protein is tRNA dimethylallyltransferase.